The sequence spans 307 residues: Oxygen-dependent coproporphyrinogen-III oxidase (307 aa).

Ser99 provides a ligand contact to substrate. Residues His103 and His113 each contribute to the a divalent metal cation site. His113 serves as the catalytic Proton donor. Asn115–Arg117 contributes to the substrate binding site. The a divalent metal cation site is built by His152 and His182. The interval Tyr247 to Arg282 is important for dimerization. Gly265–Arg267 contacts substrate.

It belongs to the aerobic coproporphyrinogen-III oxidase family. In terms of assembly, homodimer. A divalent metal cation is required as a cofactor.

It localises to the cytoplasm. It catalyses the reaction coproporphyrinogen III + O2 + 2 H(+) = protoporphyrinogen IX + 2 CO2 + 2 H2O. The protein operates within porphyrin-containing compound metabolism; protoporphyrin-IX biosynthesis; protoporphyrinogen-IX from coproporphyrinogen-III (O2 route): step 1/1. Involved in the heme biosynthesis. Catalyzes the aerobic oxidative decarboxylation of propionate groups of rings A and B of coproporphyrinogen-III to yield the vinyl groups in protoporphyrinogen-IX. The chain is Oxygen-dependent coproporphyrinogen-III oxidase from Burkholderia orbicola (strain MC0-3).